The following is a 61-amino-acid chain: Large ribosomal subunit protein uL30 (61 aa).

It belongs to the universal ribosomal protein uL30 family. Part of the 50S ribosomal subunit.

The sequence is that of Large ribosomal subunit protein uL30 from Shewanella piezotolerans (strain WP3 / JCM 13877).